The primary structure comprises 585 residues: Phosphomethylpyrimidine synthase (585 aa).

Positions 89–107 are enriched in basic and acidic residues; it reads RGDTESYEGRHVKPEDNGY. A disordered region spans residues 89-116; that stretch reads RGDTESYEGRHVKPEDNGYRSRNGSHQH. Residues N199, M228, Y257, H293, 313–315, 354–357, and E393 each bind substrate; these read SRG and DGLR. Zn(2+) is bound at residue H397. Y420 provides a ligand contact to substrate. Residue H461 participates in Zn(2+) binding. 3 residues coordinate [4Fe-4S] cluster: C541, C544, and C549.

The protein belongs to the ThiC family. Requires [4Fe-4S] cluster as cofactor.

The enzyme catalyses 5-amino-1-(5-phospho-beta-D-ribosyl)imidazole + S-adenosyl-L-methionine = 4-amino-2-methyl-5-(phosphooxymethyl)pyrimidine + CO + 5'-deoxyadenosine + formate + L-methionine + 3 H(+). Its pathway is cofactor biosynthesis; thiamine diphosphate biosynthesis. Functionally, catalyzes the synthesis of the hydroxymethylpyrimidine phosphate (HMP-P) moiety of thiamine from aminoimidazole ribotide (AIR) in a radical S-adenosyl-L-methionine (SAM)-dependent reaction. The protein is Phosphomethylpyrimidine synthase of Bacillus pumilus (strain SAFR-032).